A 644-amino-acid chain; its full sequence is MTSQVSSILSRISSPTDLKNLSLAELSLLAEQMRHKIISVLTNTGGHLASNLGIIEVTIALHYVFSSTEDKFIFDVGHQAYPHKLLTGRNTEEFDRIRHDGGLSGFTSPSESMHDLFFSGHAGNALSLALGMAKATEDSRTHILPILGDAAFSCGLTLEALNNISSNLSKFIVILNDNNMSISQNVGVMSKNLSRWIHHPKFSLFSRKIEKWLTKIPRYGNGISKRSHKLSTCLKSLFCPIPIFEQFNLAYMGPVDGHNIKRLISVFQTARDLPFPVLIHICTTKGKGLEIAQENPEKYHGVTANFNSSEKNKLLPTIKPQLTYPDVFGQTVCKLGETSPNLHIVTPAMSLGSRLEAFKEKFPKRFIDVGIAEGHAVTFSAGIAKAKSPVICSIYSTFLHRALDNVFHDVCLQGLPVILAIDRAGLAYGDGCSHHGIYDISFLRAMPNMIICQPRSAIVLQQLLQSSLQWNMPSAIRYPNIAAIQRDPIATDVNMHRDPGLGEILSQGEDILIIGLGHMCNTALSIKLQLLTHGISATVVDPVFIKPFDNNLFSILLMHHSKVIIIEEHSIRGGLASEFNDFLATYGFKVDVLHFGIPDAFFSHGDKESLLKRVGLDTESMVKRILTHFNFRTKTSPSNKLSIV.

Thiamine diphosphate contacts are provided by residues H78 and 120–122; that span reads GHA. D149 is a Mg(2+) binding site. Residues 150–151, N178, and E373 each bind thiamine diphosphate; that span reads AA. N178 serves as a coordination point for Mg(2+).

It belongs to the transketolase family. DXPS subfamily. In terms of assembly, homodimer. Mg(2+) serves as cofactor. Thiamine diphosphate is required as a cofactor.

It carries out the reaction D-glyceraldehyde 3-phosphate + pyruvate + H(+) = 1-deoxy-D-xylulose 5-phosphate + CO2. The protein operates within metabolic intermediate biosynthesis; 1-deoxy-D-xylulose 5-phosphate biosynthesis; 1-deoxy-D-xylulose 5-phosphate from D-glyceraldehyde 3-phosphate and pyruvate: step 1/1. Functionally, catalyzes the acyloin condensation reaction between C atoms 2 and 3 of pyruvate and glyceraldehyde 3-phosphate to yield 1-deoxy-D-xylulose-5-phosphate (DXP). The polypeptide is 1-deoxy-D-xylulose-5-phosphate synthase (Chlamydia felis (strain Fe/C-56) (Chlamydophila felis)).